Here is an 867-residue protein sequence, read N- to C-terminus: Rifampicin phosphotransferase (867 aa).

The segment at 1–314 (MKPYVLKFQE…FYIVQSRPIT (314 aa)) is ATP-binding. Residues lysine 22, arginine 117, glycine 132, threonine 136, glutamine 183, glutamate 297, glutamine 309, and arginine 311 each coordinate ATP. Residues 327–754 (NRVYISVAHQ…TSDGEMINGE (428 aa)) are rifampicin-binding. Positions 336 and 351 each coordinate rifampicin. A swivel phosphohistidine region spans residues 767–865 (GLPVSSGTVE…INGTEGYIEI (99 aa)). The Tele-phosphohistidine intermediate role is filled by histidine 825.

Belongs to the rifampicin phosphotransferase family.

It carries out the reaction rifampicin + ATP + H2O = 21-phosphorifampicin + AMP + phosphate + 2 H(+). Catalyzes the phosphorylation of rifampicin, also known as rifampin (RIF), leading to its inactivation. Confers high level resistance to a variety of clinically used rifamycin antibiotics. Does not show phosphoenolpyruvate (PEP) synthase activity. The polypeptide is Rifampicin phosphotransferase (Listeria monocytogenes serotype 4b (strain F2365)).